The primary structure comprises 101 residues: Small ribosomal subunit protein bS18c (101 aa).

The span at 1–19 shows a compositional bias: basic residues; sequence MDKSKRPFRKSKRSFRRRL. Positions 1–23 are disordered; the sequence is MDKSKRPFRKSKRSFRRRLPPIG.

This sequence belongs to the bacterial ribosomal protein bS18 family. In terms of assembly, part of the 30S ribosomal subunit.

The protein resides in the plastid. It localises to the chloroplast. The protein is Small ribosomal subunit protein bS18c of Ceratophyllum demersum (Rigid hornwort).